The following is a 270-amino-acid chain: tRNA pseudouridine synthase A (270 aa).

The active-site Nucleophile is the aspartate 52. Substrate is bound at residue tyrosine 110. Residues 251–270 (TGAADEPAAPHGVTETRMQL) form a disordered region.

The protein belongs to the tRNA pseudouridine synthase TruA family. In terms of assembly, homodimer.

It catalyses the reaction uridine(38/39/40) in tRNA = pseudouridine(38/39/40) in tRNA. Formation of pseudouridine at positions 38, 39 and 40 in the anticodon stem and loop of transfer RNAs. The protein is tRNA pseudouridine synthase A of Roseiflexus sp. (strain RS-1).